The following is a 302-amino-acid chain: Methionyl-tRNA formyltransferase (302 aa).

A (6S)-5,6,7,8-tetrahydrofolate-binding site is contributed by 108–111; it reads SLLP.

It belongs to the Fmt family.

The enzyme catalyses L-methionyl-tRNA(fMet) + (6R)-10-formyltetrahydrofolate = N-formyl-L-methionyl-tRNA(fMet) + (6S)-5,6,7,8-tetrahydrofolate + H(+). Attaches a formyl group to the free amino group of methionyl-tRNA(fMet). The formyl group appears to play a dual role in the initiator identity of N-formylmethionyl-tRNA by promoting its recognition by IF2 and preventing the misappropriation of this tRNA by the elongation apparatus. The chain is Methionyl-tRNA formyltransferase from Cereibacter sphaeroides (strain ATCC 17025 / ATH 2.4.3) (Rhodobacter sphaeroides).